The chain runs to 1331 residues: Alpha,alpha-trehalose-phosphate synthase [UDP-forming] 1 (1331 aa).

The span at 1-13 (MTDTATGVHSNAN) shows a compositional bias: polar residues. Disordered regions lie at residues 1 to 50 (MTDT…DNDP), 71 to 118 (TGKE…SGQL), and 1312 to 1331 (PMDQ…SFGN). Positions 39–50 (DPFDRPKNDNDP) are enriched in basic and acidic residues. Residues 77-98 (LDESDDMTENEDHDEMANEDDG) are compositionally biased toward acidic residues. Residues 102-112 (NEKKVETRKMD) are compositionally biased toward basic and acidic residues. Over residues 1318 to 1331 (SSTLGASLGTSFGN) the composition is skewed to polar residues.

It in the N-terminal section; belongs to the glycosyltransferase 20 family. The protein in the C-terminal section; belongs to the gob-1 trehalose phosphatase family.

The catalysed reaction is D-glucose 6-phosphate + UDP-alpha-D-glucose = alpha,alpha-trehalose 6-phosphate + UDP + H(+). Catalyzes the production of trehalose from glucose-6-phosphate and UDP-alpha-D-glucose in a 2 step process. This Caenorhabditis elegans protein is Alpha,alpha-trehalose-phosphate synthase [UDP-forming] 1 (tps-1).